Here is a 345-residue protein sequence, read N- to C-terminus: Tryptophan--tRNA ligase (345 aa).

Residues 12-14 (RPT) and 20-21 (GH) each bind ATP. A 'HIGH' region motif is present at residues 13–21 (PTGKLHLGH). Aspartate 144 lines the L-tryptophan pocket. Residues 156–158 (GKD), leucine 194, and 202–206 (KMSKS) each bind ATP. Positions 202–206 (KMSKS) match the 'KMSKS' region motif.

Belongs to the class-I aminoacyl-tRNA synthetase family. In terms of assembly, homodimer.

The protein resides in the cytoplasm. The catalysed reaction is tRNA(Trp) + L-tryptophan + ATP = L-tryptophyl-tRNA(Trp) + AMP + diphosphate + H(+). In terms of biological role, catalyzes the attachment of tryptophan to tRNA(Trp). This chain is Tryptophan--tRNA ligase, found in Chlamydia caviae (strain ATCC VR-813 / DSM 19441 / 03DC25 / GPIC) (Chlamydophila caviae).